A 292-amino-acid polypeptide reads, in one-letter code: Coiled-coil domain-containing protein 137 (292 aa).

A compositionally biased stretch (low complexity) spans 1-16 (MAGLRRGAAAVAPAGT). 4 disordered regions span residues 1–94 (MAGL…AQAA), 139–183 (FLSK…EKAA), 205–243 (PELT…LTTS), and 263–292 (ALKR…EMQL). Basic and acidic residues-rich tracts occupy residues 57-78 (KNQD…RQEM), 155-164 (PKKEKSERKK), and 173-183 (KARQRREEKAA). Residues 156-194 (KKEKSERKKAFQKRRLDKARQRREEKAAERLEQELLQDT) adopt a coiled-coil conformation. Residues 222 to 232 (KKSLMLKKLLS) are compositionally biased toward low complexity. Ser232 bears the Phosphoserine mark. Positions 234 to 243 (GSVSQPLTTS) are enriched in polar residues. Residues 247–276 (QRIVAEERERAVNAYRALKRLQQQRQETQS) adopt a coiled-coil conformation.

It is found in the chromosome. This chain is Coiled-coil domain-containing protein 137 (CCDC137), found in Bos taurus (Bovine).